Here is a 435-residue protein sequence, read N- to C-terminus: Cyclin-J-like protein (435 aa).

The Cyclin N-terminal domain occupies 14–191; that stretch reads DVHCTLREKE…LLEAFSWNLC (178 aa). The interval 120 to 142 is disordered; that stretch reads SSNSPASAPHPPPTPPQVAETTG.

The protein belongs to the cyclin family. Cyclin J subfamily.

The polypeptide is Cyclin-J-like protein (CCNJL) (Homo sapiens (Human)).